The following is a 233-amino-acid chain: Uracil-DNA glycosylase (233 aa).

Aspartate 70 serves as the catalytic Proton acceptor.

Belongs to the uracil-DNA glycosylase (UDG) superfamily. UNG family.

The protein resides in the cytoplasm. The enzyme catalyses Hydrolyzes single-stranded DNA or mismatched double-stranded DNA and polynucleotides, releasing free uracil.. Excises uracil residues from the DNA which can arise as a result of misincorporation of dUMP residues by DNA polymerase or due to deamination of cytosine. This Helicobacter pylori (strain P12) protein is Uracil-DNA glycosylase.